The following is a 152-amino-acid chain: Zinc finger SWIM domain-containing protein 7 (152 aa).

Residues 76–114 form an SWIM-type zinc finger; it reads YTCLASCHYCSCPAFSFSVLRKSDSLLCKHLLAIYLSQL.

The protein belongs to the SWS1 family. In terms of assembly, interacts with RAD51D and XRCC3; involved in homologous recombination repair. Interacts with SWSAP1; they form a functional complex involved in homologous recombination repair and stabilize each other.

It localises to the nucleus. Involved in early stages of the homologous recombination repair (HRR) pathway of double-stranded DNA breaks arising during DNA replication or induced by DNA-damaging agents. Required for meiotic progression, hence for fertility. The chain is Zinc finger SWIM domain-containing protein 7 (Zswim7) from Mus musculus (Mouse).